The following is a 22-amino-acid chain: Cysteine-rich venom protein notescatin (22 aa).

The span at 1–15 (SNKKDYQKEIVDKHN) shows a compositional bias: basic and acidic residues. A disordered region spans residues 1 to 22 (SNKKDYQKEIVDKHNALRRSVK).

It belongs to the CRISP family. In terms of processing, contains 8 disulfide bonds. As to expression, expressed by the venom gland.

The protein resides in the secreted. This Notechis scutatus scutatus (Mainland tiger snake) protein is Cysteine-rich venom protein notescatin.